We begin with the raw amino-acid sequence, 1063 residues long: MADLNIVMNGDFFAGIEPWYPNGCEAFVVSSDPFSSEVMSADSSSGGYVVVTNRKETWQGLEQDITTRVASGMNYTVSTCVGVSGPFNESAEVLSTVRLEHEDSPTEYLCIGKTYASRDKWVDLEGTFSISNMPDRVVLYLEGPAPGKDLLIRSVTVRSSTSSDFQETEKNTDASNVFPLALNIIKNHDFSDGLYSWNTNGCDSFVVSSNDCNLESNAVVNNRSETWQGLEQDITDNVSPGFSYKVSASVSVSGPVLGSAQVLATLKLEHKSSATEFQLIGKTYASKDIWKTLEGTFEVSGRPDRVVFFLEGPPPGIDLLVKSVTIHCESDNQFERSREFCSAPESDNHIFLNSSFSDGLNHWSGRGCNLMLHESLADGKILPDSGTCFASASERTHKWSGIEQDITERVQRKLIYEASSVVRLSHSHHTVQATLYVQYLDQREEYIGISSVQGTHDDWVELKGKFLLNGSPARAVVYIEGPPPGIDVFVDHFAVKPAEKETPSGRPYIESHAFGMNIVSNSHLSDGTIEGWFPLGDCHLKVGDGSPRILPPLARDSLRKTQGYLSGRYVLATNRSGTWMGPAQTITDKVKLFVTYQVSAWVKIGSGGRTSPQDVNIALSVDGNWVNGGKVEVDDGDWHEVVGSFRIEKEAKEVMLHVQGPSPGVDLMVAGLQIFAVDRKARLSYLRGQADVVRKRNVCLKFSGLDPSELSGATVKIRQTRNSFPLGSCISRSNIDNEDFVDFFLNNFDWAVFGYELKWYWTEPEQGNFNYRDANEMIEFCERYNIKTRGHCIFWEVESAIQPWVQQLTGSKLEAAVENRVTDLLTRYNGKFRHYDVNNEMLHGSFYRDRLDSDARANMFKTAHELDPLATLFLNEYHIEDGFDSRSSPEKYIKLVHKLQKKGAPVGGIGIQGHITSPVGHIVRSALDKLSTLGLPIWFTELDVSSTNEHIRGDDLEVMLWEAFAHPAVEGVMLWGFWELFMSREHSHLVNADGEVNEAGKRFLEIKREWLSFVDGEIEDGGGLEFRGYHGSYTVEVVTSESKYVTNFVVDKGNSPVDVIIDL.

CBM-cenC domains are found at residues 5 to 146, 183 to 313, 348 to 482, and 517 to 662; these read NIVM…GPAP, NIIK…LEGP, NHIF…IEGP, and NIVS…QGPS. The 296-residue stretch at 711–1006 folds into the GH10 domain; sequence SGATVKIRQT…NEAGKRFLEI (296 aa). Catalysis depends on Glu-840, which acts as the Proton donor. Residue Glu-941 is the Nucleophile of the active site.

This sequence belongs to the glycosyl hydrolase 10 (cellulase F) family.

It carries out the reaction Endohydrolysis of (1-&gt;4)-beta-D-xylosidic linkages in xylans.. The protein operates within glycan degradation; xylan degradation. In terms of biological role, binds to and hydrolyzes insoluble and soluble xylan substrates. This is Endo-1,4-beta-xylanase 2 from Arabidopsis thaliana (Mouse-ear cress).